The sequence spans 371 residues: tRNA 2-selenouridine synthase (371 aa).

Residues 14-137 enclose the Rhodanese domain; sequence FLDDVPLIDL…MRRFLIDTLD (124 aa). Cys-97 serves as the catalytic S-selanylcysteine intermediate.

Belongs to the SelU family. In terms of assembly, monomer.

It carries out the reaction 5-methylaminomethyl-2-thiouridine(34) in tRNA + selenophosphate + (2E)-geranyl diphosphate + H2O + H(+) = 5-methylaminomethyl-2-selenouridine(34) in tRNA + (2E)-thiogeraniol + phosphate + diphosphate. It catalyses the reaction 5-methylaminomethyl-2-thiouridine(34) in tRNA + (2E)-geranyl diphosphate = 5-methylaminomethyl-S-(2E)-geranyl-thiouridine(34) in tRNA + diphosphate. The enzyme catalyses 5-methylaminomethyl-S-(2E)-geranyl-thiouridine(34) in tRNA + selenophosphate + H(+) = 5-methylaminomethyl-2-(Se-phospho)selenouridine(34) in tRNA + (2E)-thiogeraniol. The catalysed reaction is 5-methylaminomethyl-2-(Se-phospho)selenouridine(34) in tRNA + H2O = 5-methylaminomethyl-2-selenouridine(34) in tRNA + phosphate. Its function is as follows. Involved in the post-transcriptional modification of the uridine at the wobble position (U34) of tRNA(Lys), tRNA(Glu) and tRNA(Gln). Catalyzes the conversion of 2-thiouridine (S2U-RNA) to 2-selenouridine (Se2U-RNA). Acts in a two-step process involving geranylation of 2-thiouridine (S2U) to S-geranyl-2-thiouridine (geS2U) and subsequent selenation of the latter derivative to 2-selenouridine (Se2U) in the tRNA chain. This chain is tRNA 2-selenouridine synthase, found in Aeromonas salmonicida (strain A449).